Reading from the N-terminus, the 64-residue chain is Translation machinery-associated protein 7 homolog (64 aa).

Positions 1-64 (MSGRQGGKAK…GGGIKKSGKK (64 aa)) are disordered. Residues 21–50 (DLSEEDVEFKKKQQEEAKKIKEMAAKAGQR) adopt a coiled-coil conformation. A compositionally biased stretch (basic and acidic residues) spans 28–44 (EFKKKQQEEAKKIKEMA). Positions 53–64 (LLGGGIKKSGKK) are enriched in gly residues.

The protein belongs to the TMA7 family.

This chain is Translation machinery-associated protein 7 homolog, found in Caenorhabditis briggsae.